Consider the following 104-residue polypeptide: MHLHLRGICLVLAVASSSSSALAADAGHGADLAKRWCASCHVVANGQAVASADVPSFASVARRPDFSSEKLAFFLLDPHPKMPSFPLSRTEAGDIAAYIGSLRP.

The signal sequence occupies residues 1–23 (MHLHLRGICLVLAVASSSSSALA). C37, C40, H41, and M82 together coordinate heme c.

The protein belongs to the cytochrome c family. Monoheme monomer. Has the tendency to dimerize. In terms of processing, binds 1 heme c group covalently per subunit.

It is found in the periplasm. The chain is Cytochrome c-552 (cycB) from Bradyrhizobium diazoefficiens (strain JCM 10833 / BCRC 13528 / IAM 13628 / NBRC 14792 / USDA 110).